The following is a 1251-amino-acid chain: Insulin receptor substrate 1 (1251 aa).

S3 is subject to Phosphoserine. A mediates interaction with PHIP region spans residues 3-137; it reads SPPESDGFSD…GAGGGGGSCS (135 aa). The PH domain occupies 12 to 115; sequence DVRKVGYLRK…WYQALLQLHN (104 aa). Phosphoserine; by CK2 is present on S99. The IRS-type PTB domain occupies 160 to 264; the sequence is FKEVWQVILK…EAMRAMSDEF (105 aa). The disordered stretch occupies residues 262–430; the sequence is DEFRPRSKSQ…SDGGFISSDE (169 aa). The segment covering 269–281 has biased composition (low complexity); that stretch reads KSQSSSNCSNPIS. S270 bears the Phosphoserine mark. The residue at position 307 (S307) is a Phosphoserine; by RPS6KB1. S312 bears the Phosphoserine; by IKKB, MAPK8 and RPS6KB1 mark. 4 positions are modified to phosphoserine: S323, S330, S345, and S348. Residues 354–363 are compositionally biased toward basic residues; the sequence is THAHRHRGSA. Composition is skewed to low complexity over residues 383-404 and 412-424; these read SPSATSPVSLSSSSTSGHGSTS and SSASVSGSPSDGG. At S419 the chain carries Phosphoserine. Residues T446 and T453 each carry the phosphothreonine modification. At Y465 the chain carries Phosphotyrosine; by INSR. The YXXM motif 1 motif lies at 465–468; that stretch reads YICM. The interval 494–513 is disordered; that stretch reads YTPGTGLGTSPALAGDEASS. S527 carries the post-translational modification Phosphoserine; by RPS6KB1. Positions 551–554 match the YXXM motif 2 motif; it reads YTEM. The segment covering 594–610 has biased composition (basic and acidic residues); that stretch reads RRGGHHRPDSSTLHTDD. The segment at 594-616 is disordered; sequence RRGGHHRPDSSTLHTDDGYMPMS. The residue at position 612 (Y612) is a Phosphotyrosine; by INSR. Positions 612–615 match the YXXM motif 3 motif; that stretch reads YMPM. S629 is modified (phosphoserine). Y632 bears the Phosphotyrosine; by INSR mark. Positions 632 to 635 match the YXXM motif 4 motif; sequence YMPM. Position 636 is a phosphoserine; by RPS6KB1 (S636). Y662 carries the phosphotyrosine modification. The YXXM motif 5 signature appears at 662–665; that stretch reads YMMM. The interval 668–692 is disordered; it reads SGGCSPDIGGGPSSSSSSTVPSGSS. Residues 730-733 carry the YXXM motif 6 motif; the sequence is YMNM. Disordered stretches follow at residues 734–753 and 769–946; these read SPVGDSNTSSPSDCYYGPED and FKHT…EETG. Over residues 774–783 the composition is skewed to basic and acidic residues; the sequence is RPGEPEEGAR. Residue S792 is modified to Phosphoserine; by AMPK and SIK2. 2 stretches are compositionally biased toward low complexity: residues 799-813 and 875-891; these read AATADDSSSSTSSDS and QQQQQQQQQQQQQQQQQ. A Phosphoserine modification is found at S901. Phosphotyrosine; by INSR is present on Y905. Residues 905–907 form a GRB2-binding region; sequence YVN. Over residues 924–937 the composition is skewed to polar residues; that stretch reads SRSSPSVRCPSQLQ. Residues Y950 and Y998 each carry the phosphotyrosine; by INSR modification. 3 short sequence motifs (YXXM motif) span residues 950 to 953, 998 to 1001, and 1021 to 1024; these read YMKM, YMTM, and YADM. Disordered regions lie at residues 1091–1124 and 1130–1149; these read NQSAKVIRADPQGCRRRHSSETFSSTPSATRVGN and AGAAIGGSGGSSSSSEDVKR. A phosphoserine mark is found at S1109 and S1110. The segment covering 1111 to 1123 has biased composition (polar residues); sequence ETFSSTPSATRVG. Y1188 bears the Phosphotyrosine; by INSR mark. K1195 participates in a covalent cross-link: Glycyl lysine isopeptide (Lys-Gly) (interchain with G-Cter in ubiquitin). Residues 1195–1251 are disordered; that stretch reads KDFKQRPQECTPQPQPPPPPPPHQPLGSSESSSTRRSSEDLSAYASISFQKQPEDLQ. The segment covering 1207-1218 has biased composition (pro residues); it reads QPQPPPPPPPHQ. The residue at position 1238 (Y1238) is a Phosphotyrosine; by INSR.

In terms of assembly, interacts with UBTF and PIK3CA. Interacts (via phosphorylated YXXM motifs) with PIK3R1. Interacts with ROCK1 and FER. Interacts (via PH domain) with PHIP. Interacts with GRB2. Interacts with SOCS7. Interacts (via IRS-type PTB domain) with IGF1R and INSR (via the tyrosine-phosphorylated NPXY motif). Interacts with ALK. Interacts with EIF2AK2/PKR. Interacts with GKAP1. Interacts with DGKZ in the absence of insulin; insulin stimulation decreases this interaction. Found in a ternary complex with DGKZ and PIP5K1A in the absence of insulin stimulation. Interacts with SQSTM1; the interaction is disrupted by the presence of tensin TNS2. Interacts with NCK1 (via SH2 domain). Interacts with NCK2 (via SH3 domain). Interacts with SH2B1; this interaction enhances leptin-induced activation of the PI3-kinase pathway. Interacts with DVL2; this interaction promotes the Wnt/beta-catenin signaling pathway. Interacts with JAK1. In terms of processing, serine phosphorylation of IRS1 is a mechanism for insulin resistance. Ser-312 phosphorylation inhibits insulin action through disruption of IRS1 interaction with the insulin receptor. Phosphorylation of Tyr-905 is required for GRB2-binding. Phosphorylated by ALK. Phosphorylated at Ser-270, Ser-307, Ser-636 and Ser-1109 by RPS6KB1; phosphorylation induces accelerated degradation of IRS1. Phosphorylated on tyrosine residues in response to insulin. In skeletal muscles, dephosphorylated on Tyr-612 by TNS2 under anabolic conditions; dephosphorylation results in the proteasomal degradation of IRS1. Ubiquitinated by the Cul7-RING(FBXW8) complex in a mTOR-dependent manner, leading to its degradation: the Cul7-RING(FBXW8) complex recognizes and binds IRS1 previously phosphorylated by S6 kinase (RPS6KB1 or RPS6KB2). Ubiquitinated by TRAF4 through 'Lys-29' linkage; this ubiquitination regulates the interaction of IRS1 with IGFR and IRS1 tyrosine phosphorylation upon IGF1 stimulation. Post-translationally, S-nitrosylation at by BLVRB inhibits its activity.

It localises to the cytoplasm. Its subcellular location is the nucleus. Signaling adapter protein that participates in the signal transduction from two prominent receptor tyrosine kinases, insulin receptor/INSR and insulin-like growth factor I receptor/IGF1R. Plays therefore an important role in development, growth, glucose homeostasis as well as lipid metabolism. Upon phosphorylation by the insulin receptor, functions as a signaling scaffold that propagates insulin action through binding to SH2 domain-containing proteins including the p85 regulatory subunit of PI3K, NCK1, NCK2, GRB2 or SHP2. Recruitment of GRB2 leads to the activation of the guanine nucleotide exchange factor SOS1 which in turn triggers the Ras/Raf/MEK/MAPK signaling cascade. Activation of the PI3K/AKT pathway is responsible for most of insulin metabolic effects in the cell, and the Ras/Raf/MEK/MAPK is involved in the regulation of gene expression and in cooperation with the PI3K pathway regulates cell growth and differentiation. Acts a positive regulator of the Wnt/beta-catenin signaling pathway through suppression of DVL2 autophagy-mediated degradation leading to cell proliferation. In Chlorocebus aethiops (Green monkey), this protein is Insulin receptor substrate 1 (IRS1).